Reading from the N-terminus, the 133-residue chain is Ribosome-binding factor A (133 aa).

It belongs to the RbfA family. In terms of assembly, monomer. Binds 30S ribosomal subunits, but not 50S ribosomal subunits or 70S ribosomes.

It is found in the cytoplasm. In terms of biological role, one of several proteins that assist in the late maturation steps of the functional core of the 30S ribosomal subunit. Associates with free 30S ribosomal subunits (but not with 30S subunits that are part of 70S ribosomes or polysomes). Required for efficient processing of 16S rRNA. May interact with the 5'-terminal helix region of 16S rRNA. This chain is Ribosome-binding factor A, found in Proteus mirabilis (strain HI4320).